The sequence spans 190 residues: ATP synthase subunit delta (190 aa).

This sequence belongs to the ATPase delta chain family. As to quaternary structure, F-type ATPases have 2 components, F(1) - the catalytic core - and F(0) - the membrane proton channel. F(1) has five subunits: alpha(3), beta(3), gamma(1), delta(1), epsilon(1). F(0) has three main subunits: a(1), b(2) and c(10-14). The alpha and beta chains form an alternating ring which encloses part of the gamma chain. F(1) is attached to F(0) by a central stalk formed by the gamma and epsilon chains, while a peripheral stalk is formed by the delta and b chains.

It is found in the cell inner membrane. Functionally, f(1)F(0) ATP synthase produces ATP from ADP in the presence of a proton or sodium gradient. F-type ATPases consist of two structural domains, F(1) containing the extramembraneous catalytic core and F(0) containing the membrane proton channel, linked together by a central stalk and a peripheral stalk. During catalysis, ATP synthesis in the catalytic domain of F(1) is coupled via a rotary mechanism of the central stalk subunits to proton translocation. Its function is as follows. This protein is part of the stalk that links CF(0) to CF(1). It either transmits conformational changes from CF(0) to CF(1) or is implicated in proton conduction. This chain is ATP synthase subunit delta, found in Anaplasma marginale (strain Florida).